The sequence spans 438 residues: GTPase Der (438 aa).

EngA-type G domains are found at residues 4-169 (PVVA…PEKG) and 178-353 (IDVA…DQNS). GTP is bound by residues 10–17 (GRPNVGKS), 57–61 (DTGGI), 120–123 (NKVD), 184–191 (GKPNVGKS), 231–235 (DTAGL), and 296–299 (NKWD). Residues 354-438 (RRVKTGLLNE…PIRLKFKQKT (85 aa)) enclose the KH-like domain.

The protein belongs to the TRAFAC class TrmE-Era-EngA-EngB-Septin-like GTPase superfamily. EngA (Der) GTPase family. As to quaternary structure, associates with the 50S ribosomal subunit.

Its function is as follows. GTPase that plays an essential role in the late steps of ribosome biogenesis. This chain is GTPase Der, found in Halothermothrix orenii (strain H 168 / OCM 544 / DSM 9562).